The sequence spans 247 residues: Adenosylcobinamide-GDP ribazoletransferase (247 aa).

5 helical membrane passes run 34 to 54 (IVMFPFIGLILGGISGLIFIL), 59 to 79 (CGIPLAALFCILALALLTGGF), 113 to 133 (GGLALIFVLLAKILVVSELAL), 138 to 158 (MLAALAAACAAGRGSAVLLMY), and 194 to 214 (VLLLGMQGLATMVVTLAAIFI).

It belongs to the CobS family. The cofactor is Mg(2+).

It is found in the cell inner membrane. It carries out the reaction alpha-ribazole + adenosylcob(III)inamide-GDP = adenosylcob(III)alamin + GMP + H(+). The enzyme catalyses alpha-ribazole 5'-phosphate + adenosylcob(III)inamide-GDP = adenosylcob(III)alamin 5'-phosphate + GMP + H(+). It functions in the pathway cofactor biosynthesis; adenosylcobalamin biosynthesis; adenosylcobalamin from cob(II)yrinate a,c-diamide: step 7/7. Its function is as follows. Joins adenosylcobinamide-GDP and alpha-ribazole to generate adenosylcobalamin (Ado-cobalamin). Also synthesizes adenosylcobalamin 5'-phosphate from adenosylcobinamide-GDP and alpha-ribazole 5'-phosphate. This Salmonella typhi protein is Adenosylcobinamide-GDP ribazoletransferase.